The chain runs to 396 residues: Probable intron-encoded endonuclease aI3 (396 aa).

Residues 51-90 (TNNTNNNNPADSSSYESRMRAAGNSNSNSNSNSDSNINNT) form a disordered region. Over residues 74 to 90 (NSNSNSNSNSDSNINNT) the composition is skewed to low complexity.

It belongs to the LAGLIDADG endonuclease family.

It localises to the mitochondrion. Mitochondrial DNA endonuclease involved in intron homing. The sequence is that of Probable intron-encoded endonuclease aI3 (aI3) from Kluyveromyces lactis (strain ATCC 8585 / CBS 2359 / DSM 70799 / NBRC 1267 / NRRL Y-1140 / WM37) (Yeast).